The primary structure comprises 151 residues: Peptide methionine sulfoxide reductase MsrB (151 aa).

The region spanning 9–132 is the MsrB domain; it reads DGELKRTLTK…NSAALKFIPF (124 aa). The Nucleophile role is filled by Cys-121.

Belongs to the MsrB Met sulfoxide reductase family.

The catalysed reaction is L-methionyl-[protein] + [thioredoxin]-disulfide + H2O = L-methionyl-(R)-S-oxide-[protein] + [thioredoxin]-dithiol. In Mycoplasma pneumoniae (strain ATCC 29342 / M129 / Subtype 1) (Mycoplasmoides pneumoniae), this protein is Peptide methionine sulfoxide reductase MsrB.